A 693-amino-acid polypeptide reads, in one-letter code: Elongation factor G (693 aa).

The tr-type G domain occupies Glu8–Leu282. Residues Ala17–Thr24, Asp81–His85, and Asn135–Asp138 each bind GTP.

This sequence belongs to the TRAFAC class translation factor GTPase superfamily. Classic translation factor GTPase family. EF-G/EF-2 subfamily.

It localises to the cytoplasm. In terms of biological role, catalyzes the GTP-dependent ribosomal translocation step during translation elongation. During this step, the ribosome changes from the pre-translocational (PRE) to the post-translocational (POST) state as the newly formed A-site-bound peptidyl-tRNA and P-site-bound deacylated tRNA move to the P and E sites, respectively. Catalyzes the coordinated movement of the two tRNA molecules, the mRNA and conformational changes in the ribosome. This is Elongation factor G from Streptococcus pneumoniae (strain Hungary19A-6).